Here is a 187-residue protein sequence, read N- to C-terminus: Large ribosomal subunit protein mL49 (187 aa).

The protein belongs to the mitochondrion-specific ribosomal protein mL49 family.

The protein localises to the mitochondrion. In Caenorhabditis elegans, this protein is Large ribosomal subunit protein mL49 (mrpl-49).